The chain runs to 217 residues: Probable GTP-binding protein EngB (217 aa).

Positions 27-201 constitute an EngB-type G domain; it reads GGVEIAFAGR…AQTLSGWYLA (175 aa). GTP is bound by residues 35 to 42, 62 to 66, 80 to 83, 147 to 150, and 180 to 182; these read GRSNAGKS, GRTQL, DLPG, TKAD, and FSS. Residues S42 and T64 each contribute to the Mg(2+) site.

It belongs to the TRAFAC class TrmE-Era-EngA-EngB-Septin-like GTPase superfamily. EngB GTPase family. Requires Mg(2+) as cofactor.

In terms of biological role, necessary for normal cell division and for the maintenance of normal septation. In Aeromonas salmonicida (strain A449), this protein is Probable GTP-binding protein EngB.